A 172-amino-acid chain; its full sequence is Large ribosomal subunit protein uL10 (172 aa).

The protein belongs to the universal ribosomal protein uL10 family. Part of the ribosomal stalk of the 50S ribosomal subunit. The N-terminus interacts with L11 and the large rRNA to form the base of the stalk. The C-terminus forms an elongated spine to which L12 dimers bind in a sequential fashion forming a multimeric L10(L12)X complex.

Its function is as follows. Forms part of the ribosomal stalk, playing a central role in the interaction of the ribosome with GTP-bound translation factors. The chain is Large ribosomal subunit protein uL10 from Rhodopseudomonas palustris (strain BisA53).